Reading from the N-terminus, the 622-residue chain is Chaperone protein HscA homolog (622 aa).

It belongs to the heat shock protein 70 family.

Chaperone involved in the maturation of iron-sulfur cluster-containing proteins. Has a low intrinsic ATPase activity which is markedly stimulated by HscB. This is Chaperone protein HscA homolog from Delftia acidovorans (strain DSM 14801 / SPH-1).